A 114-amino-acid chain; its full sequence is Large ribosomal subunit protein uL22 (114 aa).

It belongs to the universal ribosomal protein uL22 family. In terms of assembly, part of the 50S ribosomal subunit.

Functionally, this protein binds specifically to 23S rRNA; its binding is stimulated by other ribosomal proteins, e.g. L4, L17, and L20. It is important during the early stages of 50S assembly. It makes multiple contacts with different domains of the 23S rRNA in the assembled 50S subunit and ribosome. The globular domain of the protein is located near the polypeptide exit tunnel on the outside of the subunit, while an extended beta-hairpin is found that lines the wall of the exit tunnel in the center of the 70S ribosome. The protein is Large ribosomal subunit protein uL22 of Aeromonas hydrophila subsp. hydrophila (strain ATCC 7966 / DSM 30187 / BCRC 13018 / CCUG 14551 / JCM 1027 / KCTC 2358 / NCIMB 9240 / NCTC 8049).